Here is an 89-residue protein sequence, read N- to C-terminus: Dynein light chain LC6, flagellar outer arm (89 aa).

The protein belongs to the dynein light chain family. Consists of at least 3 heavy chains (alpha, beta and gamma), 2 intermediate chains and 8 light chains.

The protein resides in the cytoplasm. Its subcellular location is the cytoskeleton. It is found in the flagellum axoneme. The polypeptide is Dynein light chain LC6, flagellar outer arm (Heliocidaris crassispina (Sea urchin)).